A 366-amino-acid polypeptide reads, in one-letter code: MSADGLVSAAASAEEQAFEAGLRPRTLTEFVGQRKVREQLSIMLEGAQARGRPPDHVLLSGPPGLGKTSLAMIIAEELAVPLRMTSGPAIERAGDLVAILTALSPGEVLFLDEIHRIARPAEELLYAAMEDFRVDVILGKGPGATAIPLDVAPFTLVGATTRSGLLTGPLRDRFGFTAHLDFYAPDELARVLTRSAGLLGVSLTEDGAAEVAGRSRGTPRIANRLLRRVRDYAEVRADGVVTRDVARAALRIYDVDGLGLDRLDRAVLEALVGRFGGGPVGLTTLAVSVGEEPETVEDVAEPFLLRAGLLIRTSRGRIATPAAFEHLGLEPVADPLGRSQAPLFSNTGLLAEGGLLPEDGLHPGGG.

A large ATPase domain (RuvB-L) region spans residues 3 to 183; that stretch reads ADGLVSAAAS…FGFTAHLDFY (181 aa). Residues L22, R23, G64, K67, T68, S69, 130 to 132, R173, Y183, and R220 contribute to the ATP site; that span reads EDF. Residue T68 participates in Mg(2+) binding. The segment at 184 to 254 is small ATPAse domain (RuvB-S); the sequence is APDELARVLT…VARAALRIYD (71 aa). Residues 257–366 are head domain (RuvB-H); it reads GLGLDRLDRA…PEDGLHPGGG (110 aa). Residues R312 and R317 each coordinate DNA.

Belongs to the RuvB family. As to quaternary structure, homohexamer. Forms an RuvA(8)-RuvB(12)-Holliday junction (HJ) complex. HJ DNA is sandwiched between 2 RuvA tetramers; dsDNA enters through RuvA and exits via RuvB. An RuvB hexamer assembles on each DNA strand where it exits the tetramer. Each RuvB hexamer is contacted by two RuvA subunits (via domain III) on 2 adjacent RuvB subunits; this complex drives branch migration. In the full resolvosome a probable DNA-RuvA(4)-RuvB(12)-RuvC(2) complex forms which resolves the HJ.

Its subcellular location is the cytoplasm. The enzyme catalyses ATP + H2O = ADP + phosphate + H(+). The RuvA-RuvB-RuvC complex processes Holliday junction (HJ) DNA during genetic recombination and DNA repair, while the RuvA-RuvB complex plays an important role in the rescue of blocked DNA replication forks via replication fork reversal (RFR). RuvA specifically binds to HJ cruciform DNA, conferring on it an open structure. The RuvB hexamer acts as an ATP-dependent pump, pulling dsDNA into and through the RuvAB complex. RuvB forms 2 homohexamers on either side of HJ DNA bound by 1 or 2 RuvA tetramers; 4 subunits per hexamer contact DNA at a time. Coordinated motions by a converter formed by DNA-disengaged RuvB subunits stimulates ATP hydrolysis and nucleotide exchange. Immobilization of the converter enables RuvB to convert the ATP-contained energy into a lever motion, pulling 2 nucleotides of DNA out of the RuvA tetramer per ATP hydrolyzed, thus driving DNA branch migration. The RuvB motors rotate together with the DNA substrate, which together with the progressing nucleotide cycle form the mechanistic basis for DNA recombination by continuous HJ branch migration. Branch migration allows RuvC to scan DNA until it finds its consensus sequence, where it cleaves and resolves cruciform DNA. The sequence is that of Holliday junction branch migration complex subunit RuvB from Frankia alni (strain DSM 45986 / CECT 9034 / ACN14a).